We begin with the raw amino-acid sequence, 396 residues long: Activity-regulated cytoskeleton-associated protein (396 aa).

Residues 54 to 78 (SKQVERELKGLHRSVGKLENNLDGY) adopt a coiled-coil conformation. The segment at 89–100 (KSIKACLCRCQE) is interaction with SH3GL1 or SH3GL3. The interaction with DNM2 stretch occupies residues 195–214 (QSWVPGEDGQPSPGVDTQIF). At Ser-260 the chain carries Phosphoserine. Glycyl lysine isopeptide (Lys-Gly) (interchain with G-Cter in ubiquitin) cross-links involve residues Lys-268 and Lys-269. Position 278 is a phosphothreonine (Thr-278). The tract at residues 358–396 (GLEQAAEPSVTPLPTEDETEALTPALTSESVASDRTQPE) is disordered. Over residues 382–396 (ALTSESVASDRTQPE) the composition is skewed to polar residues.

This sequence belongs to the ARC/ARG3.1 family. Homooligomer; homooligomerizes into virion-like capsids. Interacts with SH3GL1/endophilin-2, SH3GL3/endophilin-3 and DNM2/DYN2. Interacts with CAMK2B (in the kinase inactive state); leading to target ARC to inactive synapses. Interacts with PSEN1. Interacts with GRIN2A and GRIN2B; inhibiting homooligomerization. In terms of processing, palmitoylation anchors the protein into the membrane by allowing direct insertion into the hydrophobic core of the lipid bilayer. Ubiquitinated by UBE3A, leading to its degradation by the proteasome, thereby promoting AMPA receptors (AMPARs) expression at synapses. Ubiquitinated by RNF216 at Lys-268 and Lys-269 limiting ARC protein levels induced by synaptic activity and thus regulating ARC-dependent forms of synaptic plasticity. Post-translationally, phosphorylation at Ser-260 by CaMK2 prevents homooligomerization into virion-like capsids by disrupting an interaction surface essential for high-order oligomerization. Phosphorylation by CaMK2 inhibits synaptic activity. In terms of tissue distribution, expressed exclusively in certain parts of the brain including cortex and molecular layer of the hippocampus. Typically expressed at high level in a minority of neurons. Basal expression higher in cortex than in hippocampus, highest in visual cortex.

The protein resides in the extracellular vesicle membrane. Its subcellular location is the postsynaptic cell membrane. The protein localises to the synapse. It is found in the postsynaptic density. It localises to the early endosome membrane. The protein resides in the cell projection. Its subcellular location is the dendrite. The protein localises to the cytoplasm. It is found in the cytoskeleton. It localises to the cell cortex. The protein resides in the dendritic spine. Its subcellular location is the cytoplasmic vesicle. The protein localises to the secretory vesicle. It is found in the acrosome. It localises to the clathrin-coated vesicle membrane. Master regulator of synaptic plasticity that self-assembles into virion-like capsids that encapsulate RNAs and mediate intercellular RNA transfer in the nervous system. ARC protein is released from neurons in extracellular vesicles that mediate the transfer of ARC mRNA into new target cells, where ARC mRNA can undergo activity-dependent translation. ARC capsids are endocytosed and are able to transfer ARC mRNA into the cytoplasm of neurons. Acts as a key regulator of synaptic plasticity: required for protein synthesis-dependent forms of long-term potentiation (LTP) and depression (LTD) and for the formation of long-term memory. Regulates synaptic plasticity by promoting endocytosis of AMPA receptors (AMPARs) in response to synaptic activity: this endocytic pathway maintains levels of surface AMPARs in response to chronic changes in neuronal activity through synaptic scaling, thereby contributing to neuronal homeostasis. Acts as a postsynaptic mediator of activity-dependent synapse elimination in the developing cerebellum by mediating elimination of surplus climbing fiber synapses. Accumulates at weaker synapses, probably to prevent their undesired enhancement. This suggests that ARC-containing virion-like capsids may be required to eliminate synaptic material. Required to transduce experience into long-lasting changes in visual cortex plasticity and for long-term memory. Involved in postsynaptic trafficking and processing of amyloid-beta A4 (APP) via interaction with PSEN1. In addition to its role in synapses, also involved in the regulation of the immune system: specifically expressed in skin-migratory dendritic cells and regulates fast dendritic cell migration, thereby regulating T-cell activation. The protein is Activity-regulated cytoskeleton-associated protein of Rattus norvegicus (Rat).